Here is a 423-residue protein sequence, read N- to C-terminus: MVFSNNDEGLINKKLPKELLLRIFSFLDIVTLCRCAQISKAWNILALDGSNWQRIDLFNFQTDVEGRVVENISKRCGGFLRKLSLRGCIGVGDSSLKTFAQNCRNIEHLNLNGCTKITDSTCYSLSRFCSKLKHLDLTSCVSITNSSLKGISEGCRHLEYLNLSWCDQITKDGVEALVRGCRGLRALLLRGCTQLEDEALKHIQNYCHELVSLNLQSCSRVTDDGVVQLCRGCPRLQALCLSGCGSLTDASLTALALNCPRLQILEAARCSHLTDAGFTLLARNCHDLEKMDLEECILITDRTLTQLSIHCPKLQALSLSHCELITDDGILHLSNSPCGHERLRVLELDNCLLITDVALEHLEHCRGLERLELYDCQQVTRAGIKRMRAQLPHVRVHAYFAPVTPPTAAGGGGPRLCRCCVIL.

An F-box domain is found at 9–55; the sequence is GLINKKLPKELLLRIFSFLDIVTLCRCAQISKAWNILALDGSNWQRI. 13 LRR repeats span residues 61 to 87, 88 to 113, 114 to 139, 140 to 165, 166 to 191, 192 to 217, 218 to 243, 244 to 269, 270 to 295, 296 to 321, 322 to 350, 351 to 375, and 376 to 401; these read QTDVEGRVVENISKRCGGFLRKLSLRG, CIGVGDSSLKTFAQNCRNIEHLNLNG, CTKITDSTCYSLSRFCSKLKHLDLTS, CVSITNSSLKGISEGCRHLEYLNLSW, CDQITKDGVEALVRGCRGLRALLLRG, CTQLEDEALKHIQNYCHELVSLNLQS, CSRVTDDGVVQLCRGCPRLQALCLSG, CGSLTDASLTALALNCPRLQILEAAR, CSHLTDAGFTLLARNCHDLEKMDLEE, CILITDRTLTQLSIHCPKLQALSLSH, CELITDDGILHLSNSPCGHERLRVLELDN, CLLITDVALEHLEHCRGLERLELYD, and CQQVTRAGIKRMRAQLPHVRVHAYFA. The interval 80–90 is interaction with Calmodulin; sequence LRKLSLRGCIG. A Glycyl lysine isopeptide (Lys-Gly) (interchain with G-Cter in ubiquitin) cross-link involves residue Lys-201. Thr-404 carries the post-translational modification Phosphothreonine. Cys-420 carries S-geranylgeranyl cysteine lipidation. The CAAX motif motif lies at 420 to 423; that stretch reads CVIL.

In terms of assembly, part of the SCF (SKP1-CUL1-F-box) E3 ubiquitin-protein ligase complex SCF(FBXL2) composed of CUL1, SKP1, RBX1 and FBXL2. Interacts with calmodulin; may antagonize substrate ubiquitination by SCF(FBXL2). May interact with PIK3R1. Interacts with PTPN13. In terms of processing, phosphorylated by GSK-beta (GSK3B), promoting recognition by FBXO3, leading to its ubiquitination by the SCF(FBXO3) complex. Ubiquitinated at Lys-201 by the SCF(FBXO3) complex in response to lipopolysaccharide (LPS), leading to its degradation by the proteasome.

The protein localises to the membrane. It participates in protein modification; protein ubiquitination. Functionally, calcium-activated substrate recognition component of the SCF (SKP1-cullin-F-box protein) E3 ubiquitin-protein ligase complex, SCF(FBXL2), which mediates the ubiquitination and subsequent proteasomal degradation of target proteins. Unlike many F-box proteins, FBXL2 does not seem to target phosphodegron within its substrates but rather calmodulin-binding motifs and is thereby antagonized by calmodulin. This is the case for the cyclins CCND2 and CCND3 which polyubiquitination and subsequent degradation are inhibited by calmodulin. Through CCND2 and CCND3 degradation induces cell-cycle arrest in G(0). SCF(FBXL2) also mediates PIK3R2 ubiquitination and proteasomal degradation thereby regulating phosphatidylinositol 3-kinase signaling and autophagy. PCYT1A monoubiquitination by SCF(FBXL2) and subsequent degradation regulates synthesis of phosphatidylcholine, which is utilized for formation of membranes and of pulmonary surfactant. The SCF(FBXL2) complex acts as a regulator of inflammation by mediating ubiquitination and degradation of TRAF proteins (TRAF1, TRAF2, TRAF3, TRAF4, TRAF5 and TRAF6). The SCF(FBXL2) complex acts as a negative regulator of the NLRP3 inflammasome by mediating ubiquitination and degradation of NLRP3. The protein is F-box/LRR-repeat protein 2 of Bos taurus (Bovine).